Consider the following 180-residue polypeptide: E1B protein, small T-antigen (180 aa).

The tract at residues 142–180 (GPAAPLARQGSQQEEQQQRQEEEQVQEEMRSGLDPPTEN) is disordered. A compositionally biased stretch (basic and acidic residues) spans 157–172 (QQQRQEEEQVQEEMRS).

Belongs to the adenoviridae E1B 19 kDa protein family.

The sequence is that of E1B protein, small T-antigen from Simian adenovirus serotype 7 (SAdV-7).